The chain runs to 372 residues: tRNA-specific 2-thiouridylase MnmA (372 aa).

ATP contacts are provided by residues 16–23 and methionine 42; that span reads GMSGGVDS. Positions 102–104 are interaction with target base in tRNA; sequence NPD. Residue cysteine 107 is the Nucleophile of the active site. A disulfide bridge connects residues cysteine 107 and cysteine 205. Glycine 132 provides a ligand contact to ATP. Residues 155–157 form an interaction with tRNA region; the sequence is KDQ. Cysteine 205 acts as the Cysteine persulfide intermediate in catalysis. An interaction with tRNA region spans residues 317-318; sequence RY.

The protein belongs to the MnmA/TRMU family.

Its subcellular location is the cytoplasm. It catalyses the reaction S-sulfanyl-L-cysteinyl-[protein] + uridine(34) in tRNA + AH2 + ATP = 2-thiouridine(34) in tRNA + L-cysteinyl-[protein] + A + AMP + diphosphate + H(+). In terms of biological role, catalyzes the 2-thiolation of uridine at the wobble position (U34) of tRNA, leading to the formation of s(2)U34. The protein is tRNA-specific 2-thiouridylase MnmA of Shewanella baltica (strain OS185).